The chain runs to 75 residues: SPbeta prophage-derived uncharacterized protein YomT (75 aa).

The polypeptide is SPbeta prophage-derived uncharacterized protein YomT (yomT) (Bacillus subtilis (strain 168)).